The chain runs to 286 residues: Polyamine aminopropyltransferase (286 aa).

In terms of domain architecture, PABS spans 5-238 (TMWHETLHDQ…GIMTFAWATD (234 aa)). Position 33 (Gln33) interacts with S-methyl-5'-thioadenosine. Spermidine is bound by residues His64 and Asp88. Residues Glu108 and 140 to 141 (DG) each bind S-methyl-5'-thioadenosine. Asp158 (proton acceptor) is an active-site residue. Position 158 to 161 (158 to 161 (DCTD)) interacts with spermidine. Position 165 (Pro165) interacts with S-methyl-5'-thioadenosine.

It belongs to the spermidine/spermine synthase family. Homodimer or homotetramer.

The protein localises to the cytoplasm. It catalyses the reaction S-adenosyl 3-(methylsulfanyl)propylamine + putrescine = S-methyl-5'-thioadenosine + spermidine + H(+). It functions in the pathway amine and polyamine biosynthesis; spermidine biosynthesis; spermidine from putrescine: step 1/1. Functionally, catalyzes the irreversible transfer of a propylamine group from the amino donor S-adenosylmethioninamine (decarboxy-AdoMet) to putrescine (1,4-diaminobutane) to yield spermidine. This chain is Polyamine aminopropyltransferase, found in Salmonella paratyphi A (strain ATCC 9150 / SARB42).